Reading from the N-terminus, the 400-residue chain is Cysteine desulfurase (400 aa).

Pyridoxal 5'-phosphate-binding positions include 72–73 (GT), N152, Q180, and 200–202 (SGH). An N6-(pyridoxal phosphate)lysine modification is found at K203. T238 provides a ligand contact to pyridoxal 5'-phosphate. C326 serves as the catalytic Cysteine persulfide intermediate. Residue C326 participates in [2Fe-2S] cluster binding.

It belongs to the class-V pyridoxal-phosphate-dependent aminotransferase family. NifS/IscS subfamily. Homodimer. Requires pyridoxal 5'-phosphate as cofactor.

The catalysed reaction is (sulfur carrier)-H + L-cysteine = (sulfur carrier)-SH + L-alanine. Catalyzes the removal of elemental sulfur atoms from cysteine to produce alanine. Seems to participate in the biosynthesis of the nitrogenase metalloclusters by providing the inorganic sulfur required for the Fe-S core formation. The chain is Cysteine desulfurase from Gluconacetobacter diazotrophicus (strain ATCC 49037 / DSM 5601 / CCUG 37298 / CIP 103539 / LMG 7603 / PAl5).